A 282-amino-acid polypeptide reads, in one-letter code: Undecaprenyl-diphosphatase (282 aa).

8 consecutive transmembrane segments (helical) span residues 1–21 (MNLFQAIILGIIQGLTEFLPI), 40–60 (GAAFTAIIQIGTLAAVLIYFA), 89–109 (WMIAVGTIPIVVFGLTFKHEI), 112–132 (VLRSLYIVSASMIGLALVLVV), 153–173 (LSWTDAIIIGLAQAMALIPGS), 196–216 (FSFLLSLPSVFAAGMLELYQT), 228–248 (LNLAVATIAAFIFGYLSIAFL), and 258–278 (GIFIAYRLILGIGLIVMIGTG).

The protein belongs to the UppP family.

The protein resides in the cell inner membrane. The enzyme catalyses di-trans,octa-cis-undecaprenyl diphosphate + H2O = di-trans,octa-cis-undecaprenyl phosphate + phosphate + H(+). Functionally, catalyzes the dephosphorylation of undecaprenyl diphosphate (UPP). Confers resistance to bacitracin. This Chlorobaculum tepidum (strain ATCC 49652 / DSM 12025 / NBRC 103806 / TLS) (Chlorobium tepidum) protein is Undecaprenyl-diphosphatase.